Reading from the N-terminus, the 253-residue chain is 5'-nucleotidase SurE (253 aa).

Residues aspartate 8, aspartate 9, serine 39, and asparagine 95 each coordinate a divalent metal cation.

The protein belongs to the SurE nucleotidase family. A divalent metal cation is required as a cofactor.

The protein localises to the cytoplasm. It catalyses the reaction a ribonucleoside 5'-phosphate + H2O = a ribonucleoside + phosphate. Nucleotidase that shows phosphatase activity on nucleoside 5'-monophosphates. This chain is 5'-nucleotidase SurE, found in Desulfatibacillum aliphaticivorans.